The chain runs to 673 residues: MSKPFKLNSAFKPSGDQPEAIRRLEEGLEDGLAHQTLLGVTGSGKTFTIANVIADLQRPTMVLAPNKTLAAQLYGEMKEFFPENAVEYFVSYYDYYQPEAYVPSSDTFIEKDASVNEHIEQMRLSATKAMLERRDVVVVASVSAIYGLGDPDLYLKMMLHLTVGMIIDQRAILRRLAELQYARNDQAFQRGTFRVRGEVIDIFPAESDDIALRVXLFDEEVERLSLFDPLTGQIVSTIPRFTIYPKTHYVTPRERIVQAMEEIKEELAARRKVLLENNKLMEEQRLTQRTQFDLEMMNELGYCSGIENYSRFLSGRGPGEPPPTLFDYLPADGLLVVDESHVTIPQIGGMYRGDRARKETLVEYGFRLPSALDNRPLKFEEFEALAPQTIYVSATPGNYELEKSGGDVVDQVVRPTGLLDPIIEVRPVATQVDDLLSEIRQRAAINERVLVTTLTKRMAEDLTEYLEEHGERVRYLHSDIDTVERMEIIRDLRLGEFDVLVGINLLREGLDMPEVSLVAILDADKEGFLRSERSLIQTIGRAARNVNGKAILYGDKITPSMAKAIGETERRREKQQKYNEEHGITPQGLNKKVVDILALGQNIAKTKAKGRGKSRPIVEPDNVPMDMSPKALQQKIHELEGLMMQHAQNLEFEEAAQIRDQLHQLRELFIAAS.

The Helicase ATP-binding domain maps to 26–415 (EGLEDGLAHQ…GDVVDQVVRP (390 aa)). Residue 39–46 (GVTGSGKT) participates in ATP binding. The Beta-hairpin motif lies at 92 to 115 (YYDYYQPEAYVPSSDTFIEKDASV). The Helicase C-terminal domain occupies 431-597 (QVDDLLSEIR…GLNKKVVDIL (167 aa)). The segment at 608 to 627 (AKGRGKSRPIVEPDNVPMDM) is disordered. Residues 633–668 (QQKIHELEGLMMQHAQNLEFEEAAQIRDQLHQLREL) form the UVR domain.

This sequence belongs to the UvrB family. In terms of assembly, forms a heterotetramer with UvrA during the search for lesions. Interacts with UvrC in an incision complex.

It localises to the cytoplasm. The UvrABC repair system catalyzes the recognition and processing of DNA lesions. A damage recognition complex composed of 2 UvrA and 2 UvrB subunits scans DNA for abnormalities. Upon binding of the UvrA(2)B(2) complex to a putative damaged site, the DNA wraps around one UvrB monomer. DNA wrap is dependent on ATP binding by UvrB and probably causes local melting of the DNA helix, facilitating insertion of UvrB beta-hairpin between the DNA strands. Then UvrB probes one DNA strand for the presence of a lesion. If a lesion is found the UvrA subunits dissociate and the UvrB-DNA preincision complex is formed. This complex is subsequently bound by UvrC and the second UvrB is released. If no lesion is found, the DNA wraps around the other UvrB subunit that will check the other stand for damage. The sequence is that of UvrABC system protein B from Escherichia coli O6:H1 (strain CFT073 / ATCC 700928 / UPEC).